A 398-amino-acid polypeptide reads, in one-letter code: Cytochrome b (398 aa).

Residues 45 to 65 traverse the membrane as a helical segment; it reads LGSIAGIALVIQIITGVILAM. Heme b-binding residues include His-95 and His-109. 9 consecutive transmembrane segments (helical) span residues 96-116, 129-149, 164-184, 192-212, 245-265, 277-297, 304-324, 339-359, and 366-386; these read AVGA…GLYY, IGII…VLPW, FSAI…GFSV, FFSL…LHLV, FVGF…EPNY, PLVT…YAIL, LGGV…PWLD, MAFW…GQPA, and ISRF…PLIG. The heme b site is built by His-196 and His-210.

Belongs to the cytochrome b family. The main subunits of complex b-c1 are: cytochrome b, cytochrome c1 and the Rieske protein. Heme b serves as cofactor.

Its subcellular location is the cell membrane. Functionally, component of the ubiquinol-cytochrome c reductase complex (complex III or cytochrome b-c1 complex), which is a respiratory chain that generates an electrochemical potential coupled to ATP synthesis. The polypeptide is Cytochrome b (petB) (Rickettsia conorii (strain ATCC VR-613 / Malish 7)).